Consider the following 257-residue polypeptide: Folate receptor alpha (257 aa).

The first 24 residues, 1 to 24 (MAQRMTTQLLLLLVWVAVVGEAQT), serve as a signal peptide directing secretion. 8 cysteine pairs are disulfide-bonded: cysteine 37–cysteine 65, cysteine 57–cysteine 105, cysteine 66–cysteine 109, cysteine 89–cysteine 175, cysteine 96–cysteine 146, cysteine 135–cysteine 209, cysteine 139–cysteine 189, and cysteine 152–cysteine 169. N-linked (GlcNAc...) asparagine glycosylation is present at asparagine 69. Folate contacts are provided by residues aspartate 103, tyrosine 107, 124–128 (WRKER), 157–162 (HKGWNW), and serine 196. Asparagine 161 carries N-linked (GlcNAc...) asparagine glycosylation. N-linked (GlcNAc...) asparagine glycosylation is present at asparagine 201. Serine 234 carries the GPI-anchor amidated serine lipid modification. A propeptide spans 235–257 (GAGPWAAWPFLLSLALMLLWLLS) (removed in mature form).

Belongs to the folate receptor family. In terms of processing, the secreted form is derived from the membrane-bound form either by cleavage of the GPI anchor, or/and by proteolysis catalyzed by a metalloprotease. Primarily expressed in tissues of epithelial origin. Expression is increased in malignant tissues. Expressed in kidney, lung and cerebellum. Detected in placenta and thymus epithelium.

The protein localises to the cell membrane. It localises to the apical cell membrane. Its subcellular location is the basolateral cell membrane. The protein resides in the secreted. It is found in the cytoplasmic vesicle. The protein localises to the clathrin-coated vesicle. It localises to the endosome. Binds to folate and reduced folic acid derivatives and mediates delivery of 5-methyltetrahydrofolate and folate analogs into the interior of cells. Has high affinity for folate and folic acid analogs at neutral pH. Exposure to slightly acidic pH after receptor endocytosis triggers a conformation change that strongly reduces its affinity for folates and mediates their release. Required for normal embryonic development and normal cell proliferation. This is Folate receptor alpha (FOLR1) from Homo sapiens (Human).